The chain runs to 427 residues: Acyl-lipid 8-desaturase (427 aa).

The interval 1-24 (MGRGGDSSGQAHPAAELAVPSDRA) is disordered. In terms of domain architecture, Cytochrome b5 heme-binding spans 36 to 84 (IVLYGKRVDVTKFQRTHPGGSKVFRIFQDRDATEQFESYHSKRAIKMME). Heme is bound by residues His52 and His75. Positions 178-182 (HSVFK) match the Histidine box-1 motif. Residues 189–209 (VGWNNAAGYFLGFVQGYAVEW) traverse the membrane as a helical segment. The short motif at 213–218 (RHNTHH) is the Histidine box-2 element. The next 2 helical transmembrane spans lie at 261–281 (VPVMAILDLYWRLESIAYVAM) and 286–306 (MLPQALALVAHYAIVAWVFAG). Positions 373-377 (QTEHH) match the Histidine box-3 motif.

The protein belongs to the fatty acid desaturase type 1 family. Requires Fe(2+) as cofactor.

The protein resides in the membrane. Functionally, fatty acid desaturase that introduces a cis double bond at the 8-position in 20-carbon polyunsaturated fatty acids incorporated in a glycerolipid that contain a Delta(8) double bond to yield (20:4(8,11,14,17)). The sequence is that of Acyl-lipid 8-desaturase from Rebecca salina (Marine microalga).